A 136-amino-acid chain; its full sequence is Cytochrome c-550 (136 aa).

Residues 1-28 (MTKLTFGALVALAMTAAASTAMSSKAMA) form the signal peptide. C41, C44, H45, and M107 together coordinate heme c.

Post-translationally, binds 1 heme c group covalently per subunit. In terms of processing, the N-terminus is blocked.

The protein localises to the periplasm. Functionally, plays a role in bacteroid respiration under conditions of oxygen limitation. Required for electron-transfer during denitrification. The polypeptide is Cytochrome c-550 (cycA) (Bradyrhizobium diazoefficiens (strain JCM 10833 / BCRC 13528 / IAM 13628 / NBRC 14792 / USDA 110)).